We begin with the raw amino-acid sequence, 235 residues long: Probable transcriptional regulatory protein Cj1172c (235 aa).

The protein belongs to the TACO1 family.

Its subcellular location is the cytoplasm. This chain is Probable transcriptional regulatory protein Cj1172c, found in Campylobacter jejuni subsp. jejuni serotype O:2 (strain ATCC 700819 / NCTC 11168).